A 201-amino-acid chain; its full sequence is Basic helix-loop-helix transcription factor scleraxis (201 aa).

Disordered regions lie at residues 1 to 92 (MSFA…NSVN) and 148 to 177 (AFFH…QPKQ). A compositionally biased stretch (gly residues) spans 59–69 (RRAGGGGPGGR). A compositionally biased stretch (basic and acidic residues) spans 70–88 (PGREPRQRHTANARERDRT). A bHLH domain is found at 75–127 (RQRHTANARERDRTNSVNTAFTALRTLIPTEPADRKLSKIETLRLASSYISHL). Over residues 157-167 (SPPPPPPPPPA) the composition is skewed to pro residues.

As to quaternary structure, efficient DNA binding requires dimerization with another bHLH protein. Dimerizes and binds the E-box consensus sequence with E12.

It is found in the nucleus. Plays an early essential role in mesoderm formation, as well as a later role in formation of somite-derived chondrogenic lineages. This Homo sapiens (Human) protein is Basic helix-loop-helix transcription factor scleraxis (SCX).